The sequence spans 435 residues: Glutamate-1-semialdehyde 2,1-aminomutase (435 aa).

Lys-266 is subject to N6-(pyridoxal phosphate)lysine.

This sequence belongs to the class-III pyridoxal-phosphate-dependent aminotransferase family. HemL subfamily. As to quaternary structure, homodimer. Requires pyridoxal 5'-phosphate as cofactor.

It localises to the cytoplasm. It carries out the reaction (S)-4-amino-5-oxopentanoate = 5-aminolevulinate. It functions in the pathway porphyrin-containing compound metabolism; protoporphyrin-IX biosynthesis; 5-aminolevulinate from L-glutamyl-tRNA(Glu): step 2/2. This chain is Glutamate-1-semialdehyde 2,1-aminomutase, found in Coxiella burnetii (strain CbuG_Q212) (Coxiella burnetii (strain Q212)).